A 177-amino-acid chain; its full sequence is CRIB domain-containing protein RIC8 (177 aa).

The CRIB domain occupies 17-30 (IGTPTDVKHVAHIG). The segment covering 72 to 89 (STRSRDIPRLPKSSRERS) has biased composition (basic and acidic residues). Residues 72-177 (STRSRDIPRL…SSTSDAGYLT (106 aa)) are disordered. Over residues 158-171 (GSQVESISDSSSTS) the composition is skewed to low complexity.

Functionally, functions as a downstream effector of Rho-related GTP binding proteins of the 'Rho of Plants' (ROPs) family. Participates in the propagation of ROP GTPase signals in specific cellular responses. This chain is CRIB domain-containing protein RIC8 (RIC8), found in Arabidopsis thaliana (Mouse-ear cress).